Consider the following 89-residue polypeptide: OMEGA-ectatommitoxin(02)-Rm1a (89 aa).

The signal sequence occupies residues 1–30; sequence MKDSYISIVIAYLMVTFILVSSMPIEGEKG. 3 disulfide bridges follow: Cys-39/Cys-52, Cys-47/Cys-68, and Cys-70/Cys-79. Residues 43-80 form the EGF-like domain; that stretch reads YANYCFNGKCVHVVAQDEPGKPCYSCICDKFYIGKRCG.

Belongs to the EGF domain peptide family. Expressed by the venom gland.

The protein resides in the secreted. In terms of biological role, ant peptide with probable defensive activity which acts as a potent agonist of the mammalian epidermal growth factor receptor (EGFR). Mimics, both structurally and functionally, vertebrate epidermal growth factor (EGF) peptide hormones. In vivo, intraplantar injection in mice causes long-lasting (several days) hypersensitivity of the injected paw to both mechanical and thermal stimuli. Its long-lasting effect is unusual for venom toxins whose effects are usually immediate. One possible explanation is that it would reduce the duration of a nest attack, discourage future attacks, or enhance the actions of subsequent exposure to other pain-inducing venom peptides. The polypeptide is OMEGA-ectatommitoxin(02)-Rm1a (Rhytidoponera metallica (Australian green-headed ant)).